We begin with the raw amino-acid sequence, 156 residues long: Small ribosomal subunit protein uS7 (156 aa).

This sequence belongs to the universal ribosomal protein uS7 family. As to quaternary structure, part of the 30S ribosomal subunit. Contacts proteins S9 and S11.

Its function is as follows. One of the primary rRNA binding proteins, it binds directly to 16S rRNA where it nucleates assembly of the head domain of the 30S subunit. Is located at the subunit interface close to the decoding center, probably blocks exit of the E-site tRNA. This Bacillus pumilus (strain SAFR-032) protein is Small ribosomal subunit protein uS7.